We begin with the raw amino-acid sequence, 170 residues long: Protein SprT (170 aa).

Residues 23-165 enclose the SprT-like domain; the sequence is QLANQHLGTD…RECGEKLQFV (143 aa). Residue H78 coordinates Zn(2+). The active site involves E79. Position 82 (H82) interacts with Zn(2+).

The protein belongs to the SprT family. Zn(2+) serves as cofactor.

The protein resides in the cytoplasm. The protein is Protein SprT of Yersinia enterocolitica serotype O:8 / biotype 1B (strain NCTC 13174 / 8081).